Reading from the N-terminus, the 876-residue chain is Phosphoenolpyruvate carboxylase (876 aa).

Catalysis depends on residues His-138 and Lys-544.

It belongs to the PEPCase type 1 family. It depends on Mg(2+) as a cofactor.

It carries out the reaction oxaloacetate + phosphate = phosphoenolpyruvate + hydrogencarbonate. Its function is as follows. Forms oxaloacetate, a four-carbon dicarboxylic acid source for the tricarboxylic acid cycle. This is Phosphoenolpyruvate carboxylase from Marinomonas sp. (strain MWYL1).